Here is a 96-residue protein sequence, read N- to C-terminus: MNKEKYGDNMMTDSDSKQAIFIIGVQGKEIKNVEQLMQELSKIVNEGSIYRYSKETGLGKGTLHKIKNNELQDPRISTVLKLLKASGKRLVIIDEW.

This is an uncharacterized protein from Methanocaldococcus jannaschii (strain ATCC 43067 / DSM 2661 / JAL-1 / JCM 10045 / NBRC 100440) (Methanococcus jannaschii).